Reading from the N-terminus, the 296-residue chain is ATP phosphoribosyltransferase (296 aa).

The protein belongs to the ATP phosphoribosyltransferase family.

It localises to the cytoplasm. It catalyses the reaction 1-(5-phospho-beta-D-ribosyl)-ATP + diphosphate = 5-phospho-alpha-D-ribose 1-diphosphate + ATP. It functions in the pathway amino-acid biosynthesis; L-histidine biosynthesis; L-histidine from 5-phospho-alpha-D-ribose 1-diphosphate: step 1/9. Functionally, catalyzes the condensation of ATP and 5-phosphoribose 1-diphosphate to form N'-(5'-phosphoribosyl)-ATP (PR-ATP). Has a crucial role in the pathway because the rate of histidine biosynthesis seems to be controlled primarily by regulation of the enzymatic activity. The chain is ATP phosphoribosyltransferase (HIS1) from Yarrowia lipolytica (strain CLIB 122 / E 150) (Yeast).